Reading from the N-terminus, the 357-residue chain is MAEITAAMVKELRESTGAGMMDCKNALSETNGDFDKAVQLLREKGLGKAAKKADRLAAEGLVSVKVSDDFTSATVSEINSETDFVAKNDQFIALTKDTTAHIQSNSLQSVEELHSSTINGVKFEEYLKSQIATIGENLVVRRFATLKAGANGVVNGYIHTNGRVGVVIAAACDSTEVASKSRDLLRQICMHIAAMRPSYLSYEDLDMTFVENEYKALVAELEKENEERRRLKDPNKPEHKIPQFASRKQLSDAILKEAEEKIKEELKAQGKPEKIWDNIIPGKINSFIADNSQLDSKLTLMGQFYVMDDKKTVEQVIAEKEKEFGGKIKIVEFICFEVGEGLEKKTEDFAAEVAAQL.

The involved in Mg(2+) ion dislocation from EF-Tu stretch occupies residues 82-85; the sequence is TDFV.

This sequence belongs to the EF-Ts family.

The protein resides in the cytoplasm. In terms of biological role, associates with the EF-Tu.GDP complex and induces the exchange of GDP to GTP. It remains bound to the aminoacyl-tRNA.EF-Tu.GTP complex up to the GTP hydrolysis stage on the ribosome. The polypeptide is Elongation factor Ts (Campylobacter jejuni subsp. jejuni serotype O:23/36 (strain 81-176)).